The primary structure comprises 408 residues: Aminoacylase-1 (408 aa).

Residue H80 coordinates Zn(2+). D82 is an active-site residue. Residue D113 coordinates Zn(2+). E147 acts as the Proton acceptor in catalysis. Positions 148, 175, and 373 each coordinate Zn(2+).

It belongs to the peptidase M20A family. As to quaternary structure, homodimer. Interacts with SPHK1. Zn(2+) is required as a cofactor. Expression is highest in kidney, strong in brain and weaker in placenta and spleen.

The protein resides in the cytoplasm. The enzyme catalyses an N-acyl-L-amino acid + H2O = an L-alpha-amino acid + a carboxylate. It catalyses the reaction N-acetyl-L-methionine + H2O = L-methionine + acetate. It carries out the reaction N-acetyl-L-glutamine + H2O = L-glutamine + acetate. Catalyzes the hydrolysis of N-acetylated amino acids to acetate and free amino acids. The polypeptide is Aminoacylase-1 (ACY1) (Homo sapiens (Human)).